We begin with the raw amino-acid sequence, 113 residues long: Protein NATD1 (113 aa).

The 91-residue stretch at 22-112 folds into the N-acetyltransferase domain; sequence EHDRRRRQFT…PLPQYLERLQ (91 aa).

This sequence belongs to the NATD1 family.

This chain is Protein NATD1 (NATD1), found in Homo sapiens (Human).